The sequence spans 609 residues: ATP-dependent lipid A-core flippase (609 aa).

6 consecutive transmembrane segments (helical) span residues 47 to 67 (LLAAIGSIFFSAADASMIYLI), 88 to 108 (ILMLMGVGMVGLLALRSVGSF), 167 to 187 (AIITVVQDGTFVIGLIVVMFV), 190 to 210 (WQLSLFLIVVGPFLGLFISII), 279 to 299 (VIQIIASLVLAFSLFTIAIFG), and 305 to 325 (GSSWLTAGSFASFFAAAAAIL). One can recognise an ABC transmembrane type-1 domain in the interval 47–340 (LLAAIGSIFF…LTKVNVVIQK (294 aa)). Residues 372–606 (VTIKDLSFAF…GGLYTRLYQS (235 aa)) enclose the ABC transporter domain. ATP is bound at residue 404–411 (GKSGSGKT).

The protein belongs to the ABC transporter superfamily. Lipid exporter (TC 3.A.1.106) family. In terms of assembly, homodimer.

The protein resides in the cell inner membrane. It carries out the reaction ATP + H2O + lipid A-core oligosaccharideSide 1 = ADP + phosphate + lipid A-core oligosaccharideSide 2.. Its function is as follows. Involved in lipopolysaccharide (LPS) biosynthesis. Translocates lipid A-core from the inner to the outer leaflet of the inner membrane. Transmembrane domains (TMD) form a pore in the inner membrane and the ATP-binding domain (NBD) is responsible for energy generation. The chain is ATP-dependent lipid A-core flippase from Francisella tularensis subsp. holarctica (strain LVS).